A 186-amino-acid chain; its full sequence is MTKEKVFKKKSSILEWGKAIVIAVILALLIRNFLFEPYVVEGKSMDPTLVDSERLFVNKTVKYTGNFKRGDIIILNGKEKSTHYVKRLIGLPGDTVEMKNDHLFINGNEVKEPYLSYNKENAKKVGINLTGDFGPIKVPKDKYFVMGDNRQESMDSRNGLGLFTKDDIQGTEEFVFFPFSNMRKAK.

Over 1–15 (MTKEKVFKKKSSILE) the chain is Cytoplasmic. A helical membrane pass occupies residues 16 to 35 (WGKAIVIAVILALLIRNFLF). Topologically, residues 36–186 (EPYVVEGKSM…FPFSNMRKAK (151 aa)) are extracellular. Catalysis depends on residues Ser44 and Lys86.

Belongs to the peptidase S26 family.

Its subcellular location is the cell membrane. It carries out the reaction Cleavage of hydrophobic, N-terminal signal or leader sequences from secreted and periplasmic proteins.. The polypeptide is Signal peptidase I P (sipP) (Bacillus subtilis subsp. natto).